Here is a 703-residue protein sequence, read N- to C-terminus: Polyribonucleotide nucleotidyltransferase (703 aa).

Residues D488 and D494 each coordinate Mg(2+). The 60-residue stretch at 555–614 (PRLYVMKINPEKIRDVIGKGGAVIRALTEETGTQINIEEDGTITIASNDSAKADEAKRRI) folds into the KH domain. Residues 624–692 (GKVYEGAITK…EKGRVKLSMK (69 aa)) form the S1 motif domain.

This sequence belongs to the polyribonucleotide nucleotidyltransferase family. The cofactor is Mg(2+).

The protein resides in the cytoplasm. The catalysed reaction is RNA(n+1) + phosphate = RNA(n) + a ribonucleoside 5'-diphosphate. Involved in mRNA degradation. Catalyzes the phosphorolysis of single-stranded polyribonucleotides processively in the 3'- to 5'-direction. This Polaromonas naphthalenivorans (strain CJ2) protein is Polyribonucleotide nucleotidyltransferase.